The chain runs to 201 residues: Recombination protein RecR (201 aa).

Residues 60-75 form a C4-type zinc finger; it reads CSRCGNVDTVDPCIVC. A Toprim domain is found at 83 to 178; it reads SVIIVVEDVS…KITRLAHGVP (96 aa).

It belongs to the RecR family.

In terms of biological role, may play a role in DNA repair. It seems to be involved in an RecBC-independent recombinational process of DNA repair. It may act with RecF and RecO. This Rhizobium johnstonii (strain DSM 114642 / LMG 32736 / 3841) (Rhizobium leguminosarum bv. viciae) protein is Recombination protein RecR.